Reading from the N-terminus, the 478-residue chain is Glutamate--tRNA ligase (478 aa).

Positions 23 to 33 (PSPTGFIHLGN) match the 'HIGH' region motif. Over residues 130 to 145 (KQKPRYDGTWRPEEGK) the composition is skewed to basic and acidic residues. The disordered stretch occupies residues 130–153 (KQKPRYDGTWRPEEGKTLPPVPEG). The 'KMSKS' region signature appears at 255 to 259 (KMSKR). ATP is bound at residue Lys258.

It belongs to the class-I aminoacyl-tRNA synthetase family. Glutamate--tRNA ligase type 1 subfamily. In terms of assembly, monomer.

The protein resides in the cytoplasm. The catalysed reaction is tRNA(Glu) + L-glutamate + ATP = L-glutamyl-tRNA(Glu) + AMP + diphosphate. Catalyzes the attachment of glutamate to tRNA(Glu) in a two-step reaction: glutamate is first activated by ATP to form Glu-AMP and then transferred to the acceptor end of tRNA(Glu). The chain is Glutamate--tRNA ligase from Paracidovorax citrulli (strain AAC00-1) (Acidovorax citrulli).